The following is a 555-amino-acid chain: CCR4-NOT transcription complex subunit 6-like (555 aa).

The interval 1-152 is required for interaction with CNOT1, CNOT3 and CNOT7; that stretch reads MRLIGMPKEK…NLYQDPDGTR (152 aa). 4 LRR repeats span residues 57–78, 80–101, 103–125, and 126–148; these read HLTALHLNDNYLSRIPPDIAKL, NLVYLDLSSNKLRSLPAELGNM, SLRELLLNNNLLRVLPYELGRLF, and QLQTLGLKGNPLSQDILNLYQDP. The nuclease domain stretch occupies residues 158–555; sequence MLDNLAVHPE…VNGVHLPNRR (398 aa). Glu240 contributes to the Mg(2+) binding site. Residues Glu240, Glu276, His360, and Pro365 each coordinate substrate. Residue Asp410 coordinates Mg(2+). The active-site Proton donor/acceptor is Asp410. Substrate contacts are provided by Asn412, Asn479, and Phe484.

It belongs to the CCR4/nocturin family. Component of the CCR4-NOT complex; distinct complexes seem to exist that differ in the participation of probably mutually exclusive catalytic subunits; the complex contains two deadenylase subunits, CNOT6 or CNOT6L, and CNOT7 or CNOT8. Interacts with CNOT1, CNOT3, CNOT7, CNOT8 and CNOT9. Interacts with TOB1. Interacts with NANOS2. Interacts with ZFP36. Interacts with ZFP36L2. Interacts with RBM46. It depends on Mg(2+) as a cofactor. Highly expressed in placenta, skeletal muscle, pancreas, testis and leukocytes. Weakly expressed in heart, spleen and thymus.

The protein localises to the cytoplasm. The protein resides in the nucleus. The enzyme catalyses Exonucleolytic cleavage of poly(A) to 5'-AMP.. Inhibited by free AMP, and with lesser efficiency also by CMP, GMP, UMP, ATP and neomycin. Its function is as follows. Has 3'-5' poly(A) exoribonuclease activity for synthetic poly(A) RNA substrate. Catalytic component of the CCR4-NOT complex which is one of the major cellular mRNA deadenylases and is linked to various cellular processes including bulk mRNA degradation, miRNA-mediated repression, translational repression during translational initiation and general transcription regulation. Additional complex functions may be a consequence of its influence on mRNA expression. May be involved in the deadenylation-dependent degradation of mRNAs through the 3'-UTR AU-rich element-mediated mechanism. Involved in deadenylation-dependent degradation of CDKN1B mRNA. Its mRNA deadenylase activity can be inhibited by TOB1. Mediates cell proliferation and cell survival and prevents cellular senescence. The protein is CCR4-NOT transcription complex subunit 6-like (CNOT6L) of Homo sapiens (Human).